We begin with the raw amino-acid sequence, 1427 residues long: Multidrug resistance-associated protein 5 (1427 aa).

At 1–147 (MPSDSEEVCL…IYRFISTRLW (147 aa)) the chain is on the cytoplasmic side. The chain crosses the membrane as a helical span at residues 148 to 168 (FSCAVFFFCLIFGFIGPTCFI). Positions 151 to 432 (AVFFFCLIFG…IPYGSRYLAE (282 aa)) constitute an ABC transmembrane type-1 1 domain. Residues 169–185 (RRLIAFAENPERDEQSR) are Extracellular-facing. The helical transmembrane segment at 186–206 (IVYSYGIALVAAISVVEFARV) threads the bilayer. Topologically, residues 207–268 (LSYGATWAVS…RLFDAVTFAP (62 aa)) are cytoplasmic. The helical transmembrane segment at 269-289 (LVLVGPLVLVGGIGYLLMVIG) threads the bilayer. A topological domain (extracellular) is located at residue Arg290. The chain crosses the membrane as a helical span at residues 291–311 (WSLLGILVFFVFDVIQFGLGK). Topologically, residues 312 to 375 (SMVACRNLAI…RKSGYAQSLA (64 aa)) are cytoplasmic. Residues 376 to 396 (IACGPVVPVVAAILTFVGVVL) traverse the membrane as a helical segment. Residues 397–399 (AGN) are Extracellular-facing. A helical membrane pass occupies residues 400-420 (DLLASDAFSAITVYFVMLFGI). Residues 421–770 (RMIPYGSRYL…TIAWRIYKQY (350 aa)) lie on the Cytoplasmic side of the membrane. The 222-residue stretch at 486–707 (PTENEVIVVE…NDAYKTFVDA (222 aa)) folds into the ABC transporter 1 domain. 518-525 (GAVGCGKS) is an ATP binding site. A helical transmembrane segment spans residues 771–791 (IHAAGGWPIWTCLVIGFIVNV). The ABC transmembrane type-1 2 domain maps to 783–1078 (LVIGFIVNVV…AVRTQTELEA (296 aa)). Topologically, residues 792 to 833 (VSNIFSTYWLSRWLKKGHDETTTITNGTEFLEMKTSLADSPV) are extracellular. Asn817 carries an N-linked (GlcNAc...) asparagine glycan. Residues 834–854 (TGFYAAVYLVALVVLTISGLF) form a helical membrane-spanning segment. Residues 855 to 909 (KACVFVKVSLTAATRLHDRMFQAVIHGATSFFDSTPTGRILNRFSKDMDEIDVKL) lie on the Cytoplasmic side of the membrane. The helical transmembrane segment at 910–930 (PFTAEVFLQNMITCLGFLVVI) threads the bilayer. A topological domain (extracellular) is located at residue Thr931. The helical transmembrane segment at 932–952 (SVFPYFLLFAIPLFVVFVVFV) threads the bilayer. Residues 953–1022 (SCFRAGIRNL…MFQSAMRWLA (70 aa)) are Cytoplasmic-facing. A helical transmembrane segment spans residues 1023–1043 (VWLDLLVVVMTAIVALLTVML). The Extracellular segment spans residues 1044 to 1049 (TGTVSP). The chain crosses the membrane as a helical span at residues 1050–1070 (ADAGMAIAFAVQMSGIFQFAV). The Cytoplasmic segment spans residues 1071 to 1427 (RTQTELEAKM…SSDTDIEVVQ (357 aa)). The ABC transporter 2 domain occupies 1117–1351 (INFSEVNLRY…DWSVYKLEDK (235 aa)). Residue 1151-1158 (GRTGSGKS) coordinates ATP. Residues 1361–1427 (VGENSEHSME…SSDTDIEVVQ (67 aa)) form a disordered region. Over residues 1382 to 1418 (DIVKVENEQKDSSDDVVHIESGDDDVKADSSEVKETS) the composition is skewed to basic and acidic residues.

This sequence belongs to the ABC transporter superfamily. ABCC family. Conjugate transporter (TC 3.A.1.208) subfamily. Highly expressed in the intestine and pharynx. Expressed at low levels in the hypodermis and in some neurons.

It is found in the basolateral cell membrane. Functionally, heme transporter required for the export of intestinal heme to different tissues and subcellular compartments. Also, required for the export of vitamin B12 from the intestine of the mother to the embryo to support embryonic development. This is Multidrug resistance-associated protein 5 from Caenorhabditis elegans.